Reading from the N-terminus, the 305-residue chain is Hepatitis A virus cellular receptor 1 homolog (305 aa).

The N-terminal stretch at 1 to 21 (MNQIQVFISGLILLLPGAVDS) is a signal peptide. Residues 22 to 122 (YVEVKGVVGH…PGWFNDQKVT (101 aa)) form the Ig-like V-type domain. The Extracellular segment spans residues 22 to 237 (YVEVKGVVGH…GKPQKNPTKG (216 aa)). 3 disulfide bridges follow: Cys-37–Cys-108, Cys-49–Cys-60, and Cys-55–Cys-107. The interval 129–185 (PEIPTRPPTRPTTTRPTATGRPTTISTRSTHVPTSIRVSTSTPPTSTHTWTHKPEPT) is disordered. Low complexity-rich tracts occupy residues 139 to 152 (PTTT…RPTT) and 161 to 177 (PTSI…STHT). A glycan (N-linked (GlcNAc...) asparagine) is linked at Asn-208. The helical transmembrane segment at 238 to 258 (FYVGICIAALLLLLLVSTVAI) threads the bilayer. Topologically, residues 259–305 (TRYILMKRKSASLSVVAFRVSKIEALQNAAVVHSRAEDNIYIVEDRP) are cytoplasmic.

The protein belongs to the immunoglobulin superfamily. TIM family. Interacts with STAM. Interacts with SELPLG. As to expression, expressed by stimulated T-cells. Expressed during primary antigen stimulation. Expressed at higher levels on B rather than T-cells, both constitutively and after activation.

Its subcellular location is the cell membrane. Functionally, phosphatidylserine receptor that plays an important functional role in regulatory B-cells homeostasis including generation, expansion and suppressor functions. As P-selectin/SELPLG ligand, plays a specialized role in activated but not naive T-cell trafficking during inflammatory responses. Controls thereby T-cell accumulation in the inflamed central nervous system (CNS) and the induction of autoimmune disease. Also regulates expression of various anti-inflammatory cytokines and co-inhibitory ligands including IL10. Acts as a regulator of T-cell proliferation. May play a role in kidney injury and repair. The protein is Hepatitis A virus cellular receptor 1 homolog (Havcr1) of Mus musculus (Mouse).